The sequence spans 577 residues: Putative laccase-1 (577 aa).

The first 28 residues, 1–28 (MGTAKIPALLWFLLAGLVLALAVNPAHG), serve as a signal peptide directing secretion. 2 Plastocyanin-like domains span residues 37-153 (FITE…PKRG) and 163-316 (KEIP…YTDS). Residues N42 and N83 are each glycosylated (N-linked (GlcNAc...) asparagine). Residues H87 and H89 each coordinate Cu cation. N-linked (GlcNAc...) asparagine glycosylation occurs at N115. The Cu cation site is built by H132 and H134. N-linked (GlcNAc...) asparagine glycosylation is found at N276, N304, N382, and N402. Residues 442–561 (DINGGGPLLT…DTMFIVKDGK (120 aa)) form the Plastocyanin-like 3 domain. Positions 478, 481, 483, 540, 541, 542, 546, and 551 each coordinate Cu cation.

This sequence belongs to the multicopper oxidase family. Requires Cu cation as cofactor.

Its subcellular location is the secreted. The protein localises to the extracellular space. The protein resides in the apoplast. The catalysed reaction is 4 hydroquinone + O2 = 4 benzosemiquinone + 2 H2O. Lignin degradation and detoxification of lignin-derived products. This is Putative laccase-1 (LAC1) from Oryza sativa subsp. japonica (Rice).